We begin with the raw amino-acid sequence, 369 residues long: MGMISFETKTKIEELEKKYKDVLSVVNEDEINKELEEVEKKLTDPSVWDDQKKAREYTQKLKRLKNISEDLKRVRSLFEDLEVAIELSDEDQEMAQHVEEIVQELEGAVKKLELEIILNGKYDPNNAYLSVHPGAGGTESQDWAQMLLRMYMRWAERKGFDVEIVEFQPGEEAGIKDATILIKGEYAYGYLKHESGVHRLVRISPFDAARRRHTSFASVNVIPEIDDDVDIEIRPEDLKIETFRASGHGGQYVNKTESAVRITHLPTGIVVSCQNERSQHQNKQTALKILKAKLYQLEMEKKRREIQEIQGELKDISWGNQIRSYIFHPYTMVKDHRTGVETANVDAVMDGDIDMFIEAELVYFARRSS.

Q251 is subject to N5-methylglutamine.

The protein belongs to the prokaryotic/mitochondrial release factor family. Methylated by PrmC. Methylation increases the termination efficiency of RF2.

It is found in the cytoplasm. In terms of biological role, peptide chain release factor 2 directs the termination of translation in response to the peptide chain termination codons UGA and UAA. This is Peptide chain release factor 2 (prfB) from Thermotoga maritima (strain ATCC 43589 / DSM 3109 / JCM 10099 / NBRC 100826 / MSB8).